A 410-amino-acid chain; its full sequence is Arginine deiminase (410 aa).

The active-site Amidino-cysteine intermediate is C400.

The protein belongs to the arginine deiminase family.

The protein resides in the cytoplasm. It carries out the reaction L-arginine + H2O = L-citrulline + NH4(+). It functions in the pathway amino-acid degradation; L-arginine degradation via ADI pathway; carbamoyl phosphate from L-arginine: step 1/2. In Borreliella burgdorferi (strain ATCC 35210 / DSM 4680 / CIP 102532 / B31) (Borrelia burgdorferi), this protein is Arginine deiminase (arcA).